A 145-amino-acid chain; its full sequence is SsrA-binding protein (145 aa).

The protein belongs to the SmpB family.

It is found in the cytoplasm. In terms of biological role, required for rescue of stalled ribosomes mediated by trans-translation. Binds to transfer-messenger RNA (tmRNA), required for stable association of tmRNA with ribosomes. tmRNA and SmpB together mimic tRNA shape, replacing the anticodon stem-loop with SmpB. tmRNA is encoded by the ssrA gene; the 2 termini fold to resemble tRNA(Ala) and it encodes a 'tag peptide', a short internal open reading frame. During trans-translation Ala-aminoacylated tmRNA acts like a tRNA, entering the A-site of stalled ribosomes, displacing the stalled mRNA. The ribosome then switches to translate the ORF on the tmRNA; the nascent peptide is terminated with the 'tag peptide' encoded by the tmRNA and targeted for degradation. The ribosome is freed to recommence translation, which seems to be the essential function of trans-translation. In Mycoplasma genitalium (strain ATCC 33530 / DSM 19775 / NCTC 10195 / G37) (Mycoplasmoides genitalium), this protein is SsrA-binding protein.